A 759-amino-acid polypeptide reads, in one-letter code: Putative ATP-dependent DNA helicase YjcD (759 aa).

Residues 68-121 (ACEPKPSKEGKKEDDQESGVIRLPKGKAIAADPSPAVTEWHRPRSIKPGTPFVP) form a disordered region. Basic and acidic residues predominate over residues 69-81 (CEPKPSKEGKKED). Residues 134–413 (VGLNTDQLKA…IYLTANYRST (280 aa)) enclose the UvrD-like helicase ATP-binding domain. ATP contacts are provided by residues 158–163 (GSGKTR) and Arg411. One can recognise a UvrD-like helicase C-terminal domain in the interval 414–676 (HPIVSSADIV…QLMTIHRSKG (263 aa)).

This sequence belongs to the helicase family. UvrD subfamily.

The protein localises to the cytoplasm. It carries out the reaction Couples ATP hydrolysis with the unwinding of duplex DNA by translocating in the 3'-5' direction.. The catalysed reaction is ATP + H2O = ADP + phosphate + H(+). Functionally, may be involved in the generation of recombinogenic substrates for the subsequent action of RecA. The chain is Putative ATP-dependent DNA helicase YjcD (yjcD) from Bacillus subtilis (strain 168).